The primary structure comprises 297 residues: Phosphatidylserine decarboxylase proenzyme (297 aa).

Active-site charge relay system; for autoendoproteolytic cleavage activity residues include Asp112, His168, and Ser255. Catalysis depends on Ser255, which acts as the Schiff-base intermediate with substrate; via pyruvic acid; for decarboxylase activity. A Pyruvic acid (Ser); by autocatalysis modification is found at Ser255.

It belongs to the phosphatidylserine decarboxylase family. PSD-B subfamily. Prokaryotic type II sub-subfamily. As to quaternary structure, heterodimer of a large membrane-associated beta subunit and a small pyruvoyl-containing alpha subunit. The cofactor is pyruvate. Post-translationally, is synthesized initially as an inactive proenzyme. Formation of the active enzyme involves a self-maturation process in which the active site pyruvoyl group is generated from an internal serine residue via an autocatalytic post-translational modification. Two non-identical subunits are generated from the proenzyme in this reaction, and the pyruvate is formed at the N-terminus of the alpha chain, which is derived from the carboxyl end of the proenzyme. The autoendoproteolytic cleavage occurs by a canonical serine protease mechanism, in which the side chain hydroxyl group of the serine supplies its oxygen atom to form the C-terminus of the beta chain, while the remainder of the serine residue undergoes an oxidative deamination to produce ammonia and the pyruvoyl prosthetic group on the alpha chain. During this reaction, the Ser that is part of the protease active site of the proenzyme becomes the pyruvoyl prosthetic group, which constitutes an essential element of the active site of the mature decarboxylase.

It localises to the cell membrane. It catalyses the reaction a 1,2-diacyl-sn-glycero-3-phospho-L-serine + H(+) = a 1,2-diacyl-sn-glycero-3-phosphoethanolamine + CO2. The protein operates within phospholipid metabolism; phosphatidylethanolamine biosynthesis; phosphatidylethanolamine from CDP-diacylglycerol: step 2/2. Catalyzes the formation of phosphatidylethanolamine (PtdEtn) from phosphatidylserine (PtdSer). The chain is Phosphatidylserine decarboxylase proenzyme from Clostridium tetani (strain Massachusetts / E88).